The primary structure comprises 701 residues: MARTTPIERYRNIGISAHIDAGKTTTTERVLFYTGVSHKIGEVHDGAATMDWMEQEQERGITITSAATTAFWSGMGKQFQPHRINIIDTPGHVDFTIEVERSMRVLDGAVMVYCAVGGVQPQSETVWRQANKYKVPRIAFVNKMDRTGANFLRCVEHIKTRLKGNPVPLQLNIGSEENFKGVIDLVKMKAINWSEADQGVSFDYEDVPAELLEKAQEMRMTLVEAAAEASEDLMEKYLGGEELTEEEIKKALRQRVLNNEIILVTCGSAFKNKGVQAMLDAVVDYLPAPTDVAAIDGLKLDGETKDERHASDDEPFAALAFKIATDPFVGNLTFFRVYSGVVNSGDSVLNSVKEKRERFGRIVQMHANKREEIKEVRAGDIAAAIGLKDVTTGDTLCDEKAPIILERMEFPEPVISIAVEPKTKADQEKMGLALGRLAQEDPSFRVWTDEESGQTIIAGMGELHLDIIVDRMRREFKVEANVGKPQVAYRETIRNTVKDIEGKHAKQSGGRGQYGHVVIDMYPLEEGKAYEFVNDIKGGVIPGEFIPGVDKGIREQLKSGPLAGYPVMDLGVRLHFGSYHDVDSSELAFKIAASMAFKAGFMKANPVLLEPIMKVEVETPEDYMGDVIGDLNRRRGLIEGMEDGPSGKIVRALVPLAEMFGYATALRSATQGRASYAMEFAKYHDAPTNVAQAVIEERKSK.

Residues 8–290 (ERYRNIGISA…AVVDYLPAPT (283 aa)) enclose the tr-type G domain. GTP is bound by residues 17–24 (AHIDAGKT), 88–92 (DTPGH), and 142–145 (NKMD).

It belongs to the TRAFAC class translation factor GTPase superfamily. Classic translation factor GTPase family. EF-G/EF-2 subfamily.

The protein localises to the cytoplasm. In terms of biological role, catalyzes the GTP-dependent ribosomal translocation step during translation elongation. During this step, the ribosome changes from the pre-translocational (PRE) to the post-translocational (POST) state as the newly formed A-site-bound peptidyl-tRNA and P-site-bound deacylated tRNA move to the P and E sites, respectively. Catalyzes the coordinated movement of the two tRNA molecules, the mRNA and conformational changes in the ribosome. This is Elongation factor G from Aeromonas hydrophila subsp. hydrophila (strain ATCC 7966 / DSM 30187 / BCRC 13018 / CCUG 14551 / JCM 1027 / KCTC 2358 / NCIMB 9240 / NCTC 8049).